Reading from the N-terminus, the 135-residue chain is Fatty acid-binding protein 5 (135 aa).

Ala2 is modified (N-acetylalanine). Position 3 is a phosphoserine (Ser3). The Nuclear localization signal signature appears at 24–34 (KELGVGLALRK). Cys43, Thr56, and Arg109 together coordinate 1-eicosanoylglycerol. Cys120 and Cys127 are joined by a disulfide. 129–131 (RVY) serves as a coordination point for 1-eicosanoylglycerol. 129–131 (RVY) is a binding site for (9Z,12Z)-octadecadienoate. Tyr131 contributes to the hexadecanoate binding site. Tyr131 provides a ligand contact to N-eicosanoyl ethanolamine. Tyr131 bears the Phosphotyrosine mark.

It belongs to the calycin superfamily. Fatty-acid binding protein (FABP) family. As to quaternary structure, monomer. As to expression, widely expressed.

The protein localises to the cytoplasm. The protein resides in the nucleus. It is found in the synapse. Its subcellular location is the postsynaptic density. It localises to the secreted. The enzyme catalyses hexadecanoate(out) = hexadecanoate(in). It carries out the reaction (9Z,12Z)-octadecadienoate(out) = (9Z,12Z)-octadecadienoate(in). It catalyses the reaction (9Z)-octadecenoate(out) = (9Z)-octadecenoate(in). Functionally, intracellular carrier for long-chain fatty acids and related active lipids, such as endocannabinoids, that regulate the metabolism and actions of the ligands they bind. In addition to the cytosolic transport, selectively delivers specific fatty acids from the cytosol to the nucleus, wherein they activate nuclear receptors. Delivers retinoic acid to the nuclear receptor peroxisome proliferator-activated receptor delta; which promotes proliferation and survival. May also serve as a synaptic carrier of endocannabinoid at central synapses and thus controls retrograde endocannabinoid signaling. Modulates inflammation by regulating PTGES induction via NF-kappa-B activation, and prostaglandin E2 (PGE2) biosynthesis during inflammation. May be involved in keratinocyte differentiation. This is Fatty acid-binding protein 5 from Mus musculus (Mouse).